A 358-amino-acid polypeptide reads, in one-letter code: Chorismate synthase (358 aa).

A disordered region spans residues 39-61; it reads ADIQPFLDKRRPGQSRHTTQRQE. 2 residues coordinate NADP(+): Arg-48 and Arg-54. FMN is bound by residues 125–127, 237–238, Gly-284, 299–303, and Arg-325; these read RSS, NA, and KPTSS.

Belongs to the chorismate synthase family. As to quaternary structure, homotetramer. It depends on FMNH2 as a cofactor.

It catalyses the reaction 5-O-(1-carboxyvinyl)-3-phosphoshikimate = chorismate + phosphate. It participates in metabolic intermediate biosynthesis; chorismate biosynthesis; chorismate from D-erythrose 4-phosphate and phosphoenolpyruvate: step 7/7. Its function is as follows. Catalyzes the anti-1,4-elimination of the C-3 phosphate and the C-6 proR hydrogen from 5-enolpyruvylshikimate-3-phosphate (EPSP) to yield chorismate, which is the branch point compound that serves as the starting substrate for the three terminal pathways of aromatic amino acid biosynthesis. This reaction introduces a second double bond into the aromatic ring system. This chain is Chorismate synthase, found in Sphingopyxis alaskensis (strain DSM 13593 / LMG 18877 / RB2256) (Sphingomonas alaskensis).